We begin with the raw amino-acid sequence, 436 residues long: Cytokine receptor-like factor 3 (436 aa).

Residues 9–87 (LMQEAWESID…VSAIEQENIK (79 aa)) are a coiled coil. In terms of domain architecture, Fibronectin type-III spans 177–270 (PPVQIEELIE…LQTSRTTLVP (94 aa)).

Belongs to the cytokine receptor-like factor 3 family.

Its subcellular location is the cytoplasm. May play a role in the negative regulation of cell cycle progression. This Xenopus laevis (African clawed frog) protein is Cytokine receptor-like factor 3 (crlf3).